Here is a 122-residue protein sequence, read N- to C-terminus: MAISKEDILNAISEMTVMEIVDLISAMEEKFGVTAAVAAAPVAADAAPAAEEKTEFDVILTEAGANKVAVIKVVRAVTGLGLKEAKAAVDEAPSTIKEAASKEEAEKIKKDLEEAGAKAELK.

The protein belongs to the bacterial ribosomal protein bL12 family. Homodimer. Part of the ribosomal stalk of the 50S ribosomal subunit. Forms a multimeric L10(L12)X complex, where L10 forms an elongated spine to which 2 to 4 L12 dimers bind in a sequential fashion. Binds GTP-bound translation factors.

In terms of biological role, forms part of the ribosomal stalk which helps the ribosome interact with GTP-bound translation factors. Is thus essential for accurate translation. The protein is Large ribosomal subunit protein bL12 of Dichelobacter nodosus (strain VCS1703A).